The sequence spans 407 residues: 4-hydroxy-3-methylbut-2-en-1-yl diphosphate synthase (flavodoxin) (407 aa).

Residues cysteine 296, cysteine 299, cysteine 342, and glutamate 349 each contribute to the [4Fe-4S] cluster site.

Belongs to the IspG family. The cofactor is [4Fe-4S] cluster.

The enzyme catalyses (2E)-4-hydroxy-3-methylbut-2-enyl diphosphate + oxidized [flavodoxin] + H2O + 2 H(+) = 2-C-methyl-D-erythritol 2,4-cyclic diphosphate + reduced [flavodoxin]. Its pathway is isoprenoid biosynthesis; isopentenyl diphosphate biosynthesis via DXP pathway; isopentenyl diphosphate from 1-deoxy-D-xylulose 5-phosphate: step 5/6. In terms of biological role, converts 2C-methyl-D-erythritol 2,4-cyclodiphosphate (ME-2,4cPP) into 1-hydroxy-2-methyl-2-(E)-butenyl 4-diphosphate. In Methylococcus capsulatus (strain ATCC 33009 / NCIMB 11132 / Bath), this protein is 4-hydroxy-3-methylbut-2-en-1-yl diphosphate synthase (flavodoxin).